A 604-amino-acid polypeptide reads, in one-letter code: uncharacterized protein (604 aa).

An ABC transmembrane type-1 domain is found at 49–332; the sequence is LILVMLMVVI…LANQFNTMLS (284 aa). A run of 4 helical transmembrane segments spans residues 50–70, 86–106, 172–192, and 288–308; these read ILVM…PFVI, LIPV…SLWF, VITF…LTLI, and IAAI…SIVV. Residues 366–600 form the ABC transporter domain; that stretch reads IEFRDVSFGY…KGFYSDLYES (235 aa). An ATP-binding site is contributed by 399-406; that stretch reads GPTGAGKT. The chain crosses the membrane as a helical span at residues 510–530; sequence LISIARAVLADPVLLILDEAT.

This sequence belongs to the ABC transporter superfamily.

Its subcellular location is the cell membrane. This is an uncharacterized protein from Bacillus subtilis (strain 168).